Here is a 123-residue protein sequence, read N- to C-terminus: Large ribosomal subunit protein uL14 (123 aa).

It belongs to the universal ribosomal protein uL14 family. In terms of assembly, part of the 50S ribosomal subunit. Forms a cluster with proteins L3 and L19. In the 70S ribosome, L14 and L19 interact and together make contacts with the 16S rRNA in bridges B5 and B8.

Its function is as follows. Binds to 23S rRNA. Forms part of two intersubunit bridges in the 70S ribosome. This chain is Large ribosomal subunit protein uL14, found in Histophilus somni (strain 129Pt) (Haemophilus somnus).